A 294-amino-acid chain; its full sequence is Sulfotransferase 1E1 (294 aa).

Residue 47–52 (KSGTTW) coordinates 3'-phosphoadenylyl sulfate. A substrate-binding site is contributed by 105–107 (KTH). His107 (proton acceptor) is an active-site residue. 3'-phosphoadenylyl sulfate is bound by residues Arg129, Ser137, Tyr192, 226 to 231 (TSFQEM), and 256 to 258 (RKG).

It belongs to the sulfotransferase 1 family. In terms of assembly, homodimer. In terms of tissue distribution, liver, intestine and at lower level in the kidney.

It is found in the cytoplasm. Its subcellular location is the cytosol. The catalysed reaction is estrone + 3'-phosphoadenylyl sulfate = estrone 3-sulfate + adenosine 3',5'-bisphosphate + H(+). It catalyses the reaction (24S)-hydroxycholesterol + 3'-phosphoadenylyl sulfate = (24S)-hydroxycholesterol 3-sulfate + adenosine 3',5'-bisphosphate + H(+). The enzyme catalyses 17beta-estradiol + 3'-phosphoadenylyl sulfate = 17beta-estradiol 3-sulfate + adenosine 3',5'-bisphosphate + H(+). It carries out the reaction 3beta-hydroxyandrost-5-en-17-one + 3'-phosphoadenylyl sulfate = dehydroepiandrosterone 3-sulfate + adenosine 3',5'-bisphosphate + H(+). The catalysed reaction is 4-ethylphenol + 3'-phosphoadenylyl sulfate = 4-ethylphenyl sulfate + adenosine 3',5'-bisphosphate + H(+). Its activity is regulated as follows. Inhibited by estradiol. In terms of biological role, sulfotransferase that utilizes 3'-phospho-5'-adenylyl sulfate (PAPS) as sulfonate donor to catalyze the sulfate conjugation of estradiol and estrone. Is a key enzyme in estrogen homeostasis, the sulfation of estrogens leads to their inactivation. Also sulfates dehydroepiandrosterone (DHEA), pregnenolone, (24S)-hydroxycholesterol and xenobiotic compounds like ethinylestradiol, equalenin, diethyl stilbesterol and 1-naphthol at significantly lower efficiency. Does not sulfonate cortisol, testosterone and dopamine. May play a role in gut microbiota-host metabolic interaction. O-sulfonates 4-ethylphenol (4-EP), a dietary tyrosine-derived metabolite produced by gut bacteria. The product 4-EPS crosses the blood-brain barrier and may negatively regulate oligodendrocyte maturation and myelination, affecting the functional connectivity of different brain regions associated with the limbic system. This is Sulfotransferase 1E1 (SULT1E1) from Homo sapiens (Human).